Here is a 289-residue protein sequence, read N- to C-terminus: uncharacterized protein (289 aa).

This is an uncharacterized protein from Archaeoglobus fulgidus (strain ATCC 49558 / DSM 4304 / JCM 9628 / NBRC 100126 / VC-16).